The primary structure comprises 529 residues: Bifunctional purine biosynthesis protein PurH (529 aa).

The MGS-like domain maps to 1–148; it reads MQQRRPVRRA…KNHKDVAIVV (148 aa).

The protein belongs to the PurH family.

The enzyme catalyses (6R)-10-formyltetrahydrofolate + 5-amino-1-(5-phospho-beta-D-ribosyl)imidazole-4-carboxamide = 5-formamido-1-(5-phospho-D-ribosyl)imidazole-4-carboxamide + (6S)-5,6,7,8-tetrahydrofolate. It catalyses the reaction IMP + H2O = 5-formamido-1-(5-phospho-D-ribosyl)imidazole-4-carboxamide. The protein operates within purine metabolism; IMP biosynthesis via de novo pathway; 5-formamido-1-(5-phospho-D-ribosyl)imidazole-4-carboxamide from 5-amino-1-(5-phospho-D-ribosyl)imidazole-4-carboxamide (10-formyl THF route): step 1/1. Its pathway is purine metabolism; IMP biosynthesis via de novo pathway; IMP from 5-formamido-1-(5-phospho-D-ribosyl)imidazole-4-carboxamide: step 1/1. This Salmonella typhi protein is Bifunctional purine biosynthesis protein PurH.